A 92-amino-acid chain; its full sequence is DNA-binding protein HU (92 aa).

The tract at residues 58–92 (AGTARNPRTGETVNRPASKTARFQVGEGLKSSLNS) is disordered.

Belongs to the bacterial histone-like protein family. In terms of assembly, homodimer.

In terms of biological role, histone-like DNA-binding protein which is capable of wrapping DNA to stabilize it, and thus to prevent its denaturation under extreme environmental conditions. The polypeptide is DNA-binding protein HU (hup) (Caulobacter vibrioides (strain ATCC 19089 / CIP 103742 / CB 15) (Caulobacter crescentus)).